The following is a 177-amino-acid chain: ATP synthase subunit b (177 aa).

Residues 15-35 traverse the membrane as a helical segment; it reads GISGGTIIYQLLMFIILLALL.

The protein belongs to the ATPase B chain family. In terms of assembly, F-type ATPases have 2 components, F(1) - the catalytic core - and F(0) - the membrane proton channel. F(1) has five subunits: alpha(3), beta(3), gamma(1), delta(1), epsilon(1). F(0) has three main subunits: a(1), b(2) and c(10-14). The alpha and beta chains form an alternating ring which encloses part of the gamma chain. F(1) is attached to F(0) by a central stalk formed by the gamma and epsilon chains, while a peripheral stalk is formed by the delta and b chains.

The protein localises to the cell membrane. Functionally, f(1)F(0) ATP synthase produces ATP from ADP in the presence of a proton or sodium gradient. F-type ATPases consist of two structural domains, F(1) containing the extramembraneous catalytic core and F(0) containing the membrane proton channel, linked together by a central stalk and a peripheral stalk. During catalysis, ATP synthesis in the catalytic domain of F(1) is coupled via a rotary mechanism of the central stalk subunits to proton translocation. Component of the F(0) channel, it forms part of the peripheral stalk, linking F(1) to F(0). This Geobacillus kaustophilus (strain HTA426) protein is ATP synthase subunit b.